Here is a 149-residue protein sequence, read N- to C-terminus: Nucleoside diphosphate kinase 1 (149 aa).

Residues Lys9, Phe57, Arg85, Thr91, Arg102, and Asn112 each contribute to the ATP site. His115 (pros-phosphohistidine intermediate) is an active-site residue.

It belongs to the NDK family. Homohexamer. Requires Mg(2+) as cofactor.

The catalysed reaction is a 2'-deoxyribonucleoside 5'-diphosphate + ATP = a 2'-deoxyribonucleoside 5'-triphosphate + ADP. The enzyme catalyses a ribonucleoside 5'-diphosphate + ATP = a ribonucleoside 5'-triphosphate + ADP. Its function is as follows. Major role in the synthesis of nucleoside triphosphates other than ATP. The ATP gamma phosphate is transferred to the NDP beta phosphate via a ping-pong mechanism, using a phosphorylated active-site intermediate. This NDK is microtubule-associated. This chain is Nucleoside diphosphate kinase 1 (NDKR), found in Oryza sativa subsp. japonica (Rice).